Reading from the N-terminus, the 1654-residue chain is Mediator of RNA polymerase II transcription subunit 12 (1654 aa).

2 disordered regions span residues 52-72 and 1481-1530; these read DLNGDNSRSQHTAGSGVLSGN and SKQT…SFQT. Positions 1515-1530 are enriched in polar residues; that stretch reads PLSSARPSSEAASFQT.

It belongs to the Mediator complex subunit 12 family. As to quaternary structure, component of the SRB8-11 complex, which itself associates with the Mediator complex.

The protein resides in the nucleus. Functionally, component of the SRB8-11 complex. The SRB8-11 complex is a regulatory module of the Mediator complex which is itself involved in regulation of basal and activated RNA polymerase II-dependent transcription. The SRB8-11 complex may be involved in the transcriptional repression of a subset of genes regulated by Mediator. It may inhibit the association of the Mediator complex with RNA polymerase II to form the holoenzyme complex. This chain is Mediator of RNA polymerase II transcription subunit 12 (SRB8), found in Scheffersomyces stipitis (strain ATCC 58785 / CBS 6054 / NBRC 10063 / NRRL Y-11545) (Yeast).